A 147-amino-acid chain; its full sequence is Hemoglobin subunit epsilon (147 aa).

A Globin domain is found at 3 to 147; it reads HFTAEEKSVI…VATALAHKYH (145 aa). Serine 51 bears the Phosphoserine mark. 2 residues coordinate heme b: histidine 64 and histidine 93.

This sequence belongs to the globin family. Red blood cells.

Its function is as follows. Hemoglobin epsilon chain is a beta-type chain found in early embryos. The sequence is that of Hemoglobin subunit epsilon (HBE1) from Sus scrofa (Pig).